The chain runs to 287 residues: Glucose import system permease protein GlcU (287 aa).

Helical transmembrane passes span 14-34 (HYLA…AMLI), 76-96 (IIVI…AYFF), 113-133 (VLFS…LLPL), 149-169 (IIFA…SMFI), 194-214 (IVFP…IIQA), 218-238 (FFIP…IAVL), and 250-270 (DTFA…VFLG). An ABC transmembrane type-1 domain is found at 71-269 (LINSLIIVIP…IIPLAIFVFL (199 aa)).

This sequence belongs to the binding-protein-dependent transport system permease family. The complex is composed of two ATP-binding proteins (GlcV), two transmembrane proteins (GlcT and GlcU) and a solute-binding protein (GlcS).

It is found in the cell membrane. Part of the ABC transporter complex GlcSTUV involved in glucose uptake. Responsible for the translocation of the substrate across the membrane. The polypeptide is Glucose import system permease protein GlcU (Saccharolobus solfataricus (strain ATCC 35092 / DSM 1617 / JCM 11322 / P2) (Sulfolobus solfataricus)).